The sequence spans 251 residues: ATP synthase subunit a (251 aa).

5 consecutive transmembrane segments (helical) span residues 28 to 48 (TDTV…AFFL), 84 to 104 (IAPF…ISNW), 130 to 150 (INYV…AGIW), 192 to 212 (IFAG…IMWA), and 220 to 240 (FDLF…ILYF).

The protein belongs to the ATPase A chain family. As to quaternary structure, F-type ATPases have 2 components, CF(1) - the catalytic core - and CF(0) - the membrane proton channel. CF(1) has five subunits: alpha(3), beta(3), gamma(1), delta(1), epsilon(1). CF(0) has three main subunits: a(1), b(2) and c(9-12). The alpha and beta chains form an alternating ring which encloses part of the gamma chain. CF(1) is attached to CF(0) by a central stalk formed by the gamma and epsilon chains, while a peripheral stalk is formed by the delta and b chains.

It is found in the cell membrane. Key component of the proton channel; it plays a direct role in the translocation of protons across the membrane. In Mycobacterium leprae (strain TN), this protein is ATP synthase subunit a.